The following is a 303-amino-acid chain: N-acetyl-D-glucosamine kinase (303 aa).

ATP-binding positions include 4–11 (GFDVGGTK) and 133–140 (GFGGGLVF). His157, Cys177, Cys179, and Cys184 together coordinate Zn(2+).

The protein belongs to the ROK (NagC/XylR) family. NagK subfamily.

The catalysed reaction is N-acetyl-D-glucosamine + ATP = N-acetyl-D-glucosamine 6-phosphate + ADP + H(+). It participates in cell wall biogenesis; peptidoglycan recycling. Catalyzes the phosphorylation of N-acetyl-D-glucosamine (GlcNAc) derived from cell-wall degradation, yielding GlcNAc-6-P. The sequence is that of N-acetyl-D-glucosamine kinase from Photobacterium profundum (strain SS9).